Consider the following 102-residue polypeptide: snRNA-activating protein complex subunit 5 (102 aa).

Polar residues predominate over residues 73–82 (QTTLKLSTRS). Residues 73–102 (QTTLKLSTRSPMEEEEEEEEEEEEEEESDS) form a disordered region. A compositionally biased stretch (acidic residues) spans 85-102 (EEEEEEEEEEEEEEESDS).

In terms of assembly, part of the SNAPc complex composed of 5 subunits: SNAPC1, SNAPC2, SNAPC3, SNAPC4 and SNAPC5. SNAPC5 interacts with SNAPC4.

It is found in the nucleus. In terms of biological role, part of the SNAPc complex required for the transcription of both RNA polymerase II and III small-nuclear RNA genes. Binds to the proximal sequence element (PSE), a non-TATA-box basal promoter element common to these 2 types of genes. Recruits TBP and BRF2 to the U6 snRNA TATA box. This is snRNA-activating protein complex subunit 5 from Mus musculus (Mouse).